Reading from the N-terminus, the 247-residue chain is Small ribosomal subunit protein uS2 (247 aa).

The protein belongs to the universal ribosomal protein uS2 family.

The polypeptide is Small ribosomal subunit protein uS2 (Cupriavidus pinatubonensis (strain JMP 134 / LMG 1197) (Cupriavidus necator (strain JMP 134))).